A 161-amino-acid polypeptide reads, in one-letter code: Small heat shock protein ibp (161 aa).

Residues 35 to 150 form the sHSP domain; that stretch reads EKPLSDTPAY…KPKKIFINIP (116 aa).

Belongs to the small heat shock protein (HSP20) family.

The protein is Small heat shock protein ibp (ibp) of Buchnera aphidicola subsp. Schizaphis graminum (strain Sg).